The chain runs to 328 residues: MIDRIWFGHSRLYLLLLPFSWLYGLITWLIRLSYRSGLRVAWRSPIPIVVVGNLTVGGNGKTPIVIWLVEQLKKRGLQVGVVSRGYSGKSGKYPLILSHHTQPEEAGDEPVVIFQRTGVPVAVAPKRKEAIRALLKKHPLDLLIADDGLQHYALKRDFELVVIDGIRRFGNACLLPAGPMRENITRLHSVDAIIINGGEAQKEEILMQLRPSQAVNLVTGEKKPVEELISVIAMAGIGHPDRFFMMLAQLGVNIIKTQIFSDHQHYTLSTLLPLAKKTQSLCMTEKDAVKCKAFAQPNWWYLPVSADFPFVQSQKLLASIEALCHRIC.

Residue threonine 55–threonine 62 coordinates ATP.

It belongs to the LpxK family.

The catalysed reaction is a lipid A disaccharide + ATP = a lipid IVA + ADP + H(+). It functions in the pathway glycolipid biosynthesis; lipid IV(A) biosynthesis; lipid IV(A) from (3R)-3-hydroxytetradecanoyl-[acyl-carrier-protein] and UDP-N-acetyl-alpha-D-glucosamine: step 6/6. Transfers the gamma-phosphate of ATP to the 4'-position of a tetraacyldisaccharide 1-phosphate intermediate (termed DS-1-P) to form tetraacyldisaccharide 1,4'-bis-phosphate (lipid IVA). This chain is Tetraacyldisaccharide 4'-kinase, found in Hamiltonella defensa subsp. Acyrthosiphon pisum (strain 5AT).